The following is a 281-amino-acid chain: Release factor glutamine methyltransferase (281 aa).

S-adenosyl-L-methionine contacts are provided by E141 and N185. Position 185–188 (185–188) interacts with substrate; it reads NPPY.

This sequence belongs to the protein N5-glutamine methyltransferase family. PrmC subfamily.

The catalysed reaction is L-glutaminyl-[peptide chain release factor] + S-adenosyl-L-methionine = N(5)-methyl-L-glutaminyl-[peptide chain release factor] + S-adenosyl-L-homocysteine + H(+). Its function is as follows. Methylates the class 1 translation termination release factors RF1/PrfA and RF2/PrfB on the glutamine residue of the universally conserved GGQ motif. The polypeptide is Release factor glutamine methyltransferase (Mycolicibacterium smegmatis (strain ATCC 700084 / mc(2)155) (Mycobacterium smegmatis)).